Here is an 824-residue protein sequence, read N- to C-terminus: Mucosa-associated lymphoid tissue lymphoma translocation protein 1 (824 aa).

A disordered region spans residues 1–27 (MSLLGDPLQALPPSAAPTGPLLAPPAG). N-acetylserine is present on Ser2. Low complexity predominate over residues 11–27 (LPPSAAPTGPLLAPPAG). Positions 39–126 (RRLSELLDQA…EVLQLLSPPG (88 aa)) constitute a Death domain. 2 consecutive Ig-like C2-type domains span residues 125–201 (PGIK…FEFS) and 212–305 (PESF…KKVE). Residue Ser135 is modified to Phosphoserine. Disulfide bonds link Cys147/Cys190 and Cys248/Cys290. Positions 348 to 562 (IGNMNYREHP…SLSEKRALTD (215 aa)) are caspase-like. A Nuclear export signal motif is present at residues 369–376 (LTNLLRQL). Residues His415 and Cys464 contribute to the active site.

It belongs to the peptidase C14B family. As to quaternary structure, homooligomer; forms oligomers which bind to TRAF6. Forms a complex with CARD14 and MALT1; resulting in the formation of a CBM (CARD14-BCL10-MALT1) complex. Forms a complex with CARD11 and MALT1; resulting in the formation of a CBM (CARD11-BCL10-MALT1) complex. Forms a complex with CARD9 and MALT1; resulting in the formation of a CBM (CARD9-BCL10-MALT1) complex. Highly expressed in peripheral blood mononuclear cells. Detected at lower levels in bone marrow, thymus and lymph node, and at very low levels in colon and lung.

The protein resides in the cytoplasm. It is found in the perinuclear region. It localises to the nucleus. Functionally, protease that enhances BCL10-induced activation: acts via formation of CBM complexes that channel adaptive and innate immune signaling downstream of CARD domain-containing proteins (CARD9, CARD11 and CARD14) to activate NF-kappa-B and MAP kinase p38 pathways which stimulate expression of genes encoding pro-inflammatory cytokines and chemokines. Mediates BCL10 cleavage: MALT1-dependent BCL10 cleavage plays an important role in T-cell antigen receptor-induced integrin adhesion. Involved in the induction of T helper 17 cells (Th17) differentiation. Cleaves RC3H1 and ZC3H12A in response to T-cell receptor (TCR) stimulation which releases their cooperatively repressed targets to promote Th17 cell differentiation. Also mediates cleavage of N4BP1 in T-cells following TCR-mediated activation, leading to N4BP1 inactivation. May also have ubiquitin ligase activity: binds to TRAF6, inducing TRAF6 oligomerization and activation of its ligase activity. The sequence is that of Mucosa-associated lymphoid tissue lymphoma translocation protein 1 from Homo sapiens (Human).